The following is a 491-amino-acid chain: Chromosomal replication initiator protein DnaA (491 aa).

Positions 1 to 69 (MTTWDKCLKK…TIQECHGNDL (69 aa)) are domain I, interacts with DnaA modulators. A domain II region spans residues 69–154 (LIIEYSNKKF…KEDEEYSFGL (86 aa)). The tract at residues 155 to 371 (PLKEKYVFDS…GALNRVLTTS (217 aa)) is domain III, AAA+ region. The ATP site is built by Gly-199, Gly-201, Lys-202, and Thr-203. Residues 372–491 (KFNHKDPTIE…YELLLDKISR (120 aa)) form a domain IV, binds dsDNA region.

Belongs to the DnaA family. In terms of assembly, oligomerizes as a right-handed, spiral filament on DNA at oriC.

The protein localises to the cytoplasm. Its function is as follows. Plays an essential role in the initiation and regulation of chromosomal replication. ATP-DnaA binds to the origin of replication (oriC) to initiate formation of the DNA replication initiation complex once per cell cycle. Binds the DnaA box (a 9 base pair repeat at the origin) and separates the double-stranded (ds)DNA. Forms a right-handed helical filament on oriC DNA; dsDNA binds to the exterior of the filament while single-stranded (ss)DNA is stabiized in the filament's interior. The ATP-DnaA-oriC complex binds and stabilizes one strand of the AT-rich DNA unwinding element (DUE), permitting loading of DNA polymerase. After initiation quickly degrades to an ADP-DnaA complex that is not apt for DNA replication. Binds acidic phospholipids. This chain is Chromosomal replication initiator protein DnaA, found in Francisella tularensis subsp. holarctica (strain LVS).